Consider the following 254-residue polypeptide: Dihydroorotate dehydrogenase B (NAD(+)), electron transfer subunit (254 aa).

Residues 1 to 99 (MLQTEMKVIQ…LGPLGKGFDI (99 aa)) form the FAD-binding FR-type domain. Residues 50 to 53 (RPIS), 67 to 69 (LYR), and 74 to 75 (GT) contribute to the FAD site. Residues Cys-218, Cys-223, Cys-226, and Cys-241 each contribute to the [2Fe-2S] cluster site.

It belongs to the PyrK family. Heterotetramer of 2 PyrK and 2 PyrD type B subunits. It depends on [2Fe-2S] cluster as a cofactor. The cofactor is FAD.

The protein operates within pyrimidine metabolism; UMP biosynthesis via de novo pathway; orotate from (S)-dihydroorotate (NAD(+) route): step 1/1. Functionally, responsible for channeling the electrons from the oxidation of dihydroorotate from the FMN redox center in the PyrD type B subunit to the ultimate electron acceptor NAD(+). This chain is Dihydroorotate dehydrogenase B (NAD(+)), electron transfer subunit, found in Listeria monocytogenes serovar 1/2a (strain ATCC BAA-679 / EGD-e).